The sequence spans 86 residues: Large ribosomal subunit protein eL20 (86 aa).

It belongs to the eukaryotic ribosomal protein eL20 family. In terms of assembly, part of the 50S ribosomal subunit. Binds 23S rRNA.

The polypeptide is Large ribosomal subunit protein eL20 (Saccharolobus solfataricus (strain ATCC 35092 / DSM 1617 / JCM 11322 / P2) (Sulfolobus solfataricus)).